The following is a 429-amino-acid chain: MSEPVIKSLLDTDMYKITMHAAVFTNFPDVTVTYKYTNRSSQLTFNKEAINWLKEQFSYLGNLRFTEEEIEYLKQEIPYLPSAYIKYISSSNYKLHPEEQISFTSEEIEGKPTHYKLKILVSGSWKDTILYEIPLLSLISEAYFKFVDIDWDYENQLEQAEKKAETLFDNGIRFSEFGTRRRRSLKAQDLIMQGIMKAVNGNPDRNKSLLLGTSNILFAKKYGVKPIGTVAHEWVMGVASISEDYLHANKNAMDCWINTFGAKNAGLALTDTFGTDDFLKSFRPPYSDAYVGVRQDSGDPVEYTKKISHHYHDVLKLPKFSKIICYSDSLNVEKAITYSHAAKENGMLATFGIGTNFTNDFRKKSEPQVKSEPLNIVIKLLEVNGNHAIKISDNLGKNMGDPATVKRVKEELGYTERSWSGDNEAHRWT.

Residues Tyr15, Phe177, and Thr229 each contribute to the nicotinate site. His232 carries the phosphohistidine; by autocatalysis modification. Arg294 provides a ligand contact to nicotinate. Thr355 lines the 5-phospho-alpha-D-ribose 1-diphosphate pocket.

The protein belongs to the NAPRTase family. Post-translationally, transiently phosphorylated on a His residue during the reaction cycle. Phosphorylation strongly increases the affinity for substrates and increases the rate of nicotinate D-ribonucleotide production. Dephosphorylation regenerates the low-affinity form of the enzyme, leading to product release.

It is found in the cytoplasm. The protein localises to the nucleus. It carries out the reaction nicotinate + 5-phospho-alpha-D-ribose 1-diphosphate + ATP + H2O = nicotinate beta-D-ribonucleotide + ADP + phosphate + diphosphate. It functions in the pathway cofactor biosynthesis; NAD(+) biosynthesis; nicotinate D-ribonucleotide from nicotinate: step 1/1. Catalyzes the first step in the biosynthesis of NAD from nicotinic acid, the ATP-dependent synthesis of beta-nicotinate D-ribonucleotide from nicotinate and 5-phospho-D-ribose 1-phosphate. Essential for growth under anaerobic conditions. This is Nicotinate phosphoribosyltransferase (NPT1) from Saccharomyces cerevisiae (strain ATCC 204508 / S288c) (Baker's yeast).